Reading from the N-terminus, the 191-residue chain is MAILAKAVGRRKEAVAQVQIKEGNGLFIINNKSAQEYLHNDFYSLLAVKAPFDVLSTSKKADMVSPDLSLTNLESTFTNLMQFSGGENAVKFDTIVKVKGGGLMGQTEAIRLGISRALCLLSTNTNPSANQNNLPNIYIPEGEGEALAIPNASDIRKQLKDKGYLTQDSRVKERRKYGLKKARKASQYHKR.

The segment at 166 to 191 is disordered; sequence TQDSRVKERRKYGLKKARKASQYHKR. Over residues 172–191 the composition is skewed to basic residues; it reads KERRKYGLKKARKASQYHKR.

It belongs to the universal ribosomal protein uS9 family.

The protein resides in the plastid. It is found in the chloroplast. The polypeptide is Small ribosomal subunit protein uS9c (rps9) (Chlamydomonas reinhardtii (Chlamydomonas smithii)).